The primary structure comprises 90 residues: UPF0367 protein SYNPCC7002_A0153 (90 aa).

It belongs to the UPF0367 family.

This is UPF0367 protein SYNPCC7002_A0153 from Picosynechococcus sp. (strain ATCC 27264 / PCC 7002 / PR-6) (Agmenellum quadruplicatum).